We begin with the raw amino-acid sequence, 469 residues long: Programmed cell death protein 4 (469 aa).

At M1 the chain carries N-acetylmethionine. 2 disordered regions span residues 1 to 38 (MDVE…EIKN) and 58 to 128 (KAKR…GTPG). S25 carries the post-translational modification Phosphoserine. The Nuclear localization signal motif lies at 58-64 (KAKRRLR). S67 bears the Phosphoserine; by PKB and RPS6KB1 mark. Residues S68, S71, S76, and S78 each carry the phosphoserine modification. The short motif at 70 to 76 (DSGRGDS) is the Phosphodegron element. The span at 74-83 (GDSVSDNGSD) shows a compositional bias: low complexity. A compositionally biased stretch (polar residues) spans 84-93 (TLRSGVTVPT). The residue at position 94 (S94) is a Phosphoserine. Residues 114 to 125 (KKGGAGGKGVWG) show a composition bias toward gly residues. Y152 is subject to Phosphotyrosine. An MI 1 domain is found at 163–284 (AFEKTLTPII…CNTYIDSYKG (122 aa)). S313 and S317 each carry phosphoserine. In terms of domain architecture, MI 2 spans 326-449 (HLVKEIDMLL…SKQLRDLCPS (124 aa)). The short motif at 448-454 (PSRGRKR) is the Nuclear localization signal element. S457 carries the phosphoserine; by PKB modification.

The protein belongs to the PDCD4 family. In terms of assembly, interacts (via MI domains) with EIF4A2. Interacts (via MI domains) with EIF4A1 (via N-terminal domain). Heterotrimer with EIF4A1; one molecule of PDCD4 binds two molecules of EIF4A1. Interacts with EIF4G1. May form a complex with EIF4A1 and EIF4G1. The interaction between PDCD4 and EIF4A1 interferes with the interaction between EIF4A1 and EIF4G. When phosphorylated, interacts with BTRC and FBXW11. Polyubiquitinated, leading to its proteasomal degradation. Rapidly degraded in response to mitogens. Phosphorylation of the phosphodegron promotes interaction with BTRC and proteasomal degradation. In terms of processing, phosphorylated at Ser-67 by RPS6KB1 in response to mitogens; phosphorylation promotes proteasomal degradation of PDCD4.

The protein localises to the nucleus. Its subcellular location is the cytoplasm. Functionally, inhibits translation initiation and cap-dependent translation. May excert its function by hindering the interaction between EIF4A1 and EIF4G. Inhibits the helicase activity of EIF4A. Modulates the activation of JUN kinase. Down-regulates the expression of MAP4K1, thus inhibiting events important in driving invasion, namely, MAPK85 activation and consequent JUN-dependent transcription. May play a role in apoptosis. Tumor suppressor. Inhibits tumor promoter-induced neoplastic transformation. Binds RNA. This is Programmed cell death protein 4 (PDCD4) from Pongo abelii (Sumatran orangutan).